The primary structure comprises 207 residues: MKVVAFERSLQGTGASRRLRNSGKTPGIVYGAGAETQLVELDHNALWHALKKEVFHSSILDLEVAGKSQQVLLRDVQYHPFRQLVLHVDFQRVDAKKKLHTKVPLHFLNQETNPAVKLSSAVISHVINEIEIECLPSALPEFLEVDLATIEAGHSVHAKDIKLPAGVTLVAHVEAENPVIAAATIPAGAIAEGEAAAAEGEGETPAA.

Belongs to the bacterial ribosomal protein bL25 family. CTC subfamily. In terms of assembly, part of the 50S ribosomal subunit; part of the 5S rRNA/L5/L18/L25 subcomplex. Contacts the 5S rRNA. Binds to the 5S rRNA independently of L5 and L18.

This is one of the proteins that binds to the 5S RNA in the ribosome where it forms part of the central protuberance. The chain is Large ribosomal subunit protein bL25 from Paraburkholderia xenovorans (strain LB400).